We begin with the raw amino-acid sequence, 403 residues long: TBC1 domain family member 20 (403 aa).

Residues 1–25 are disordered; it reads MALRSAQGDGPTSGHWDGGAEKADF. Positions 60-246 constitute a Rab-GAP TBC domain; it reads LLTDEIRRKV…RLYDFFLACH (187 aa). A run of 2 helical transmembrane segments spans residues 238 to 258 and 367 to 387; these read LYDF…AVIV and FVKL…LAVV.

As to quaternary structure, (Microbial infection) Directly interacts with the N-terminal amphipathic helix of hepatitis C virus (HCV) NS5A.

Its subcellular location is the membrane. In terms of biological role, GTPase-activating protein (GAP) specific for Rab1 and Rab2 small GTPase families for which it can accelerate the intrinsic GTP hydrolysis rate by more than five orders of magnitude. Also shows GAP activity for RAB18 GTPase. Promotes RAB18 dissociation from the endoplasmic reticulum (ER) membrane into the cytosol, probably through stimulating RAB18 GTP-hydrolysis. Involved in maintaining endoplasmic reticulum structure. This chain is TBC1 domain family member 20, found in Homo sapiens (Human).